The following is a 597-amino-acid chain: Arginine--tRNA ligase (597 aa).

The short motif at 138–148 (ANPTGPMHVGH) is the 'HIGH' region element.

It belongs to the class-I aminoacyl-tRNA synthetase family. As to quaternary structure, monomer.

It localises to the cytoplasm. It carries out the reaction tRNA(Arg) + L-arginine + ATP = L-arginyl-tRNA(Arg) + AMP + diphosphate. This Nitrobacter hamburgensis (strain DSM 10229 / NCIMB 13809 / X14) protein is Arginine--tRNA ligase.